We begin with the raw amino-acid sequence, 1077 residues long: Endo-1,4-beta-xylanase Y (1077 aa).

The N-terminal stretch at 1–26 (MKNKRVLAKITALVVLLGVFFVLPSN) is a signal peptide. In terms of domain architecture, CBM-cenC 1 spans 33-180 (DYEVVHDTFE…IFDDVTITRK (148 aa)). The GH10 domain maps to 189-538 (YAANAVLKDM…KPAYNAVASI (350 aa)). E337 (proton donor) is an active-site residue. E460 functions as the Nucleophile in the catalytic mechanism. The interval 543 to 563 (EWGDGNNPAGGGGGGKPEEPD) is disordered. The region spanning 565–714 (NGYYYHDTFE…YIDEAIGAVA (150 aa)) is the CBM-cenC 2 domain. Positions 728-796 (PPVLLGDVNG…LLRVIDKFPV (69 aa)) constitute a Dockerin domain.

The protein belongs to the glycosyl hydrolase 10 (cellulase F) family.

It catalyses the reaction Endohydrolysis of (1-&gt;4)-beta-D-xylosidic linkages in xylans.. The sequence is that of Endo-1,4-beta-xylanase Y (xynY) from Acetivibrio thermocellus (Hungateiclostridium thermocellum).